A 43-amino-acid polypeptide reads, in one-letter code: Protein PsbN (43 aa).

A helical membrane pass occupies residues 5–27 (TFITIFISCLLVSVTGYALYTAF).

The protein belongs to the PsbN family.

It localises to the plastid. Its subcellular location is the chloroplast thylakoid membrane. May play a role in photosystem I and II biogenesis. This is Protein PsbN from Chara vulgaris (Common stonewort).